Consider the following 495-residue polypeptide: EF-hand calcium-binding domain-containing protein 14 (495 aa).

Disordered stretches follow at residues 1–50 (MKKR…EEEE) and 381–404 (TNKP…FTSK). A Phosphoserine modification is found at Ser17. A compositionally biased stretch (basic residues) spans 18–31 (RRKKPKKGPSSHRL). Over residues 37–50 (PDSDSESSSEEEEE) the composition is skewed to acidic residues. 2 consecutive EF-hand domains span residues 434 to 463 (SSTE…WTSL) and 464 to 495 (GSAM…ALGI). Ca(2+) contacts are provided by Asp477, Asp479, Asp481, Arg483, and Glu488.

The polypeptide is EF-hand calcium-binding domain-containing protein 14 (EFCAB14) (Homo sapiens (Human)).